A 467-amino-acid chain; its full sequence is MKSFMDENFLLSTDTAKILYHDYAKNKPIFDYHCHLNPREVAENRQFNDLAEIWLEGDHYKWRALRTAGVPEELITGKATNYQKYLAWAKTVPLCIGNPIYHWTHLELRRPFGITNMLFNPQNAEKIWHQCNEMLQQPEFSARGIMQKMNVKLVGTTDDPIDSLQYHQAIKNDESFDIDVVPSWRPDKVFKIELPQFNDYLVQLSEIADVDIYTFADLKKALLKRLEYFDAQGCKSADHGMEIVRFSAIPDESVLNSILQKRLQNQPLLEEEVAQFSTAILVWLASEYCKRHWVMQMHIGAIRNNNSRMFALLGADSGFDSIGDRAYAYPLSRLLDAMDKENQLPKTILYCLNPRDNEMIASMIGNFQGDGIAGKIQFGSGWWFNDQKDGMERQLQQLSQLGLLSQFVGMLTDSRSFLSYTRHEYFRRILCEMIGGWVEKGEAPNDISLLGKMIEDICFNNAKNYFK.

Belongs to the metallo-dependent hydrolases superfamily. Uronate isomerase family.

It carries out the reaction D-glucuronate = D-fructuronate. It catalyses the reaction aldehydo-D-galacturonate = keto-D-tagaturonate. It functions in the pathway carbohydrate metabolism; pentose and glucuronate interconversion. In Haemophilus influenzae (strain PittGG), this protein is Uronate isomerase.